A 304-amino-acid polypeptide reads, in one-letter code: Ribosomal RNA small subunit methyltransferase H (304 aa).

S-adenosyl-L-methionine contacts are provided by residues C36 to H38, D55, F81, D102, and Q109.

The protein belongs to the methyltransferase superfamily. RsmH family.

It localises to the cytoplasm. The catalysed reaction is cytidine(1402) in 16S rRNA + S-adenosyl-L-methionine = N(4)-methylcytidine(1402) in 16S rRNA + S-adenosyl-L-homocysteine + H(+). Its function is as follows. Specifically methylates the N4 position of cytidine in position 1402 (C1402) of 16S rRNA. This chain is Ribosomal RNA small subunit methyltransferase H, found in Onion yellows phytoplasma (strain OY-M).